We begin with the raw amino-acid sequence, 313 residues long: Solute carrier family 35 member E3 (313 aa).

The next 9 helical transmembrane spans lie at 17-37, 40-60, 71-91, 126-146, 154-174, 187-206, 225-245, 252-272, and 275-295; these read GLLFNLLVSICIVFLNKWIYV, GFPNMSLTLVHFVVTWLGLYI, SLPLSKLLLLALSFCGFVVFT, FSVRIQLTLIPITVGVILNSY, LGMVFAALGVVVTSLYQVWVG, LLYYQAPMSSAMLLVAVPFF, LMVLLSGIIAFMVNLSIYWII, TYNMFGHFKFCITLCGGYILF, and PLSVNQGLGILCTLFGILTYT.

It belongs to the TPT transporter family. SLC35E subfamily.

It is found in the membrane. In terms of biological role, putative transporter. The chain is Solute carrier family 35 member E3 (Slc35e3) from Mus musculus (Mouse).